The following is a 537-amino-acid chain: Cryptic loci regulator 2 (537 aa).

Residues 96-116 are disordered; the sequence is VSARHVRPNPKSSKDTLEKQP. A compositionally biased stretch (basic and acidic residues) spans 107–116; that stretch reads SSKDTLEKQP.

Interacts with clr3.

The protein localises to the nucleus. Its subcellular location is the chromosome. The protein resides in the centromere. It localises to the telomere. In terms of biological role, required for deacetylation in the mating-type region and the centromere. Acts upstream of the histone deacetylases to promote transcriptional silencing. Required for proper positioning of nucleosomes at heterochromatic loci and for transcriptional gene silencing (TGS) function of the Snf2/Hdac-containing repressor complex (SHREC). In Schizosaccharomyces pombe (strain 972 / ATCC 24843) (Fission yeast), this protein is Cryptic loci regulator 2 (clr2).